Reading from the N-terminus, the 400-residue chain is WD repeat and FYVE domain-containing protein 2 (400 aa).

6 WD repeats span residues 22-61 (GSQE…QYWP), 66-105 (AMPS…NKMT), 112-150 (AHQS…QRLG), 153-192 (RTSA…CTLL), 197-236 (GHTG…GTAI), and 240-279 (GHND…QETP). The segment at 281–352 (WLDSDSCQKC…VCDSCHEAIT (72 aa)) adopts an FYVE-type zinc-finger fold. Zn(2+) contacts are provided by cysteine 287, cysteine 290, cysteine 314, cysteine 317, cysteine 322, cysteine 325, cysteine 344, and cysteine 347. The WD 7 repeat unit spans residues 364-399 (DSKHNIVHVHFDATRGWLLTSGTDKVIKLWDMTPVV).

In terms of assembly, homodimer. Interacts (via WD repeats 1-3) with AKT1, AKT2, PRKCZ and PRKCI. Interacts with VAMP2. Forms a complex with VAMP2 and PRKCZ. Interacts with FOXO1. Forms a complex with AKT1 and FOXO1. In terms of tissue distribution, highly expressed in the brain (at protein level).

Its subcellular location is the endosome. It is found in the early endosome. It localises to the cytoplasm. Its function is as follows. Acts in an adapter protein-like fashion to mediate the interaction between the kinase PRKCZ and its substrate VAMP2 and increases the PRKCZ-dependent phosphorylation of VAMP2. Positively regulates adipocyte differentiation, by facilitating the phosphorylation and thus inactivation of the anti-adipogenetic transcription factor FOXO1 by the kinase AKT1. Plays a role in endosomal control of AKT2 signaling; required for insulin-stimulated AKT2 phosphorylation and glucose uptake and insulin-stimulated phosphorylation of AKT2 substrates. Participates in transferrin receptor endocytosis. This Mus musculus (Mouse) protein is WD repeat and FYVE domain-containing protein 2 (Wdfy2).